Consider the following 142-residue polypeptide: HTH-type transcriptional regulator LysM (142 aa).

Positions isoleucine 6–valine 69 constitute an HTH asnC-type domain. A DNA-binding region (H-T-H motif) is located at residues tyrosine 25–glutamate 44.

Homotetramer.

The protein localises to the cytoplasm. It functions in the pathway amino-acid biosynthesis; L-lysine biosynthesis via AAA pathway [regulation]. Functionally, in the absence or at low concentrations of lysine, activates the biosynthesis of this amino acid via the alpha-aminoadipate (AAA) pathway. The protein is HTH-type transcriptional regulator LysM (lysM) of Saccharolobus solfataricus (strain ATCC 35092 / DSM 1617 / JCM 11322 / P2) (Sulfolobus solfataricus).